The primary structure comprises 118 residues: Large ribosomal subunit protein bL20 (118 aa).

It belongs to the bacterial ribosomal protein bL20 family.

Its function is as follows. Binds directly to 23S ribosomal RNA and is necessary for the in vitro assembly process of the 50S ribosomal subunit. It is not involved in the protein synthesizing functions of that subunit. This Thermosipho melanesiensis (strain DSM 12029 / CIP 104789 / BI429) protein is Large ribosomal subunit protein bL20.